Here is a 166-residue protein sequence, read N- to C-terminus: Large ribosomal subunit protein uL10 (166 aa).

This sequence belongs to the universal ribosomal protein uL10 family. As to quaternary structure, part of the ribosomal stalk of the 50S ribosomal subunit. The N-terminus interacts with L11 and the large rRNA to form the base of the stalk. The C-terminus forms an elongated spine to which L12 dimers bind in a sequential fashion forming a multimeric L10(L12)X complex.

Its function is as follows. Forms part of the ribosomal stalk, playing a central role in the interaction of the ribosome with GTP-bound translation factors. The sequence is that of Large ribosomal subunit protein uL10 from Streptococcus sanguinis (strain SK36).